A 272-amino-acid polypeptide reads, in one-letter code: METYAVFGNPIAHSKSPFIHQQFAQQLNIEHPYGRVLAPINDFINTLNAFFSAGGKGANVTVPFKEEAFARADELTERAALAGAVNTLKRLEDGRLLGDNTDGIGLLSDLERLSFIRPGLRILLIGAGGASRGVLLPLLSLDCAVTITNRTVSRAEELTKLFAHTGSIQALGMDELEGHEFDLIINATSSGISGDIPAIPSSLIHPGIYCYDMFYQKGKTPFLAWCEQRGSKRNADGLGMLVAQAAHAFLLWHGVLPDVEPVIKLLQQELSA.

Shikimate contacts are provided by residues 14-16 (SKS) and T61. K65 serves as the catalytic Proton acceptor. E77 serves as a coordination point for NADP(+). Shikimate-binding residues include N86 and D102. Residues 126–130 (GAGGA), 149–154 (NRTVSR), and M213 contribute to the NADP(+) site. Y215 contributes to the shikimate binding site. G237 is an NADP(+) binding site.

Belongs to the shikimate dehydrogenase family. In terms of assembly, homodimer.

It catalyses the reaction shikimate + NADP(+) = 3-dehydroshikimate + NADPH + H(+). Its pathway is metabolic intermediate biosynthesis; chorismate biosynthesis; chorismate from D-erythrose 4-phosphate and phosphoenolpyruvate: step 4/7. Involved in the biosynthesis of the chorismate, which leads to the biosynthesis of aromatic amino acids. Catalyzes the reversible NADPH linked reduction of 3-dehydroshikimate (DHSA) to yield shikimate (SA). The chain is Shikimate dehydrogenase (NADP(+)) from Escherichia coli O45:K1 (strain S88 / ExPEC).